The following is a 375-amino-acid chain: Putative serine protease 47 (375 aa).

The first 23 residues, 1–23 (MGYCQGVSQVAVVLLMFPKEKEA), serve as a signal peptide directing secretion. The disordered stretch occupies residues 41–60 (DGQLPMGPHSRASQVAPETT). Residues 51 to 60 (RASQVAPETT) are compositionally biased toward polar residues. The region spanning 81–323 (IYGGRDAAAG…FINWIDEIMR (243 aa)) is the Peptidase S1 domain. Cysteine 106 and cysteine 122 form a disulfide bridge. Residues histidine 121 and aspartate 172 each act as charge relay system in the active site. Residues asparagine 183 and asparagine 203 are each glycosylated (N-linked (GlcNAc...) asparagine). Cysteine 206 and cysteine 281 form a disulfide bridge. Serine 275 acts as the Charge relay system in catalysis.

It belongs to the peptidase S1 family.

The protein resides in the secreted. The polypeptide is Putative serine protease 47 (PRSS47P) (Homo sapiens (Human)).